We begin with the raw amino-acid sequence, 358 residues long: MEADEAGQQVLAYGGDPPLATALLRCRPEDFQVVEELPFALSGEGEHVWLLLCKRNTNTVWLARQLARIAGVRLVDVGYAGLKDRHGLTTQWFSVNLSGKKEPAWATALESATVQVLKVIRHSRKLQRGALKGNRFLLTLRHFQGDREVVCDRLTQIKVAGTPNYFGPQRFGRGGQNLDQVHRWFSGGKPPRGRYLRGMLLSAARAFLFNRVLSERVQAANWWQPLPGEALILDGSHGFFVAETIDEALQARVRRFDCHPSGPLWGRGESPAKRMSRALEEEVLADYALWREGLEQAGLKQERRSLRLMVADLEWSFPPAMDSLQLHFRLPAGAYATTVLREVVRTQEAVGQPFLLDE.

Asp84 acts as the Nucleophile in catalysis. Residues 161–312 form the TRUD domain; that stretch reads GTPNYFGPQR…RRSLRLMVAD (152 aa).

It belongs to the pseudouridine synthase TruD family.

It catalyses the reaction uridine(13) in tRNA = pseudouridine(13) in tRNA. Responsible for synthesis of pseudouridine from uracil-13 in transfer RNAs. This chain is tRNA pseudouridine synthase D, found in Nitrosococcus oceani (strain ATCC 19707 / BCRC 17464 / JCM 30415 / NCIMB 11848 / C-107).